We begin with the raw amino-acid sequence, 325 residues long: Leucine carboxyl methyltransferase 1 (325 aa).

S-adenosyl-L-methionine-binding positions include R79, G104, D127, D174–L175, and E200.

Belongs to the methyltransferase superfamily. LCMT family.

It carries out the reaction [phosphatase 2A protein]-C-terminal L-leucine + S-adenosyl-L-methionine = [phosphatase 2A protein]-C-terminal L-leucine methyl ester + S-adenosyl-L-homocysteine. In terms of biological role, methylates the carboxyl group of the C-terminal leucine residue of protein phosphatase 2A catalytic subunits to form alpha-leucine ester residues. This chain is Leucine carboxyl methyltransferase 1 (PPM1), found in Eremothecium gossypii (strain ATCC 10895 / CBS 109.51 / FGSC 9923 / NRRL Y-1056) (Yeast).